The sequence spans 587 residues: 5-aminolevulinate synthase, erythroid-specific, mitochondrial (587 aa).

Residues 1–49 (MVTAAMLLQCCPVPARGPTSLLGKVVKTHQFLFGIGRCPILATQGPNCS) constitute a mitochondrion transit peptide. Residue Arg-163 coordinates succinyl-CoA. The pyridoxal 5'-phosphate site is built by Cys-258 and Phe-259. The succinyl-CoA site is built by Ser-280 and Lys-299. Pyridoxal 5'-phosphate is bound by residues Ser-332, His-360, and Thr-388. Lys-391 is a catalytic residue. Lys-391 is modified (N6-(pyridoxal phosphate)lysine). Residues Thr-420 and Thr-421 each contribute to the pyridoxal 5'-phosphate site. A succinyl-CoA-binding site is contributed by Thr-508.

This sequence belongs to the class-II pyridoxal-phosphate-dependent aminotransferase family. Homodimer. Interacts with SUCLA2. It depends on pyridoxal 5'-phosphate as a cofactor.

Its subcellular location is the mitochondrion inner membrane. The enzyme catalyses succinyl-CoA + glycine + H(+) = 5-aminolevulinate + CO2 + CoA. It participates in porphyrin-containing compound metabolism; protoporphyrin-IX biosynthesis; 5-aminolevulinate from glycine: step 1/1. Its function is as follows. Catalyzes the pyridoxal 5'-phosphate (PLP)-dependent condensation of succinyl-CoA and glycine to form aminolevulinic acid (ALA), with CoA and CO2 as by-products. Contributes significantly to heme formation during erythropoiesis. The sequence is that of 5-aminolevulinate synthase, erythroid-specific, mitochondrial (ALAS2) from Pongo abelii (Sumatran orangutan).